The sequence spans 607 residues: Chaperone protein dnaK (607 aa).

The segment covering lysine 579 to lysine 591 has biased composition (polar residues). The tract at residues lysine 579–glutamate 607 is disordered. Basic and acidic residues predominate over residues alanine 592–glutamate 607.

Belongs to the heat shock protein 70 family.

Its subcellular location is the plastid. The protein resides in the chloroplast. In terms of biological role, acts as a chaperone. The chain is Chaperone protein dnaK from Cyanidioschyzon merolae (strain NIES-3377 / 10D) (Unicellular red alga).